A 345-amino-acid chain; its full sequence is UDP-3-O-acylglucosamine N-acyltransferase 3 (345 aa).

The active-site Proton acceptor is the histidine 236.

The protein belongs to the transferase hexapeptide repeat family. LpxD subfamily. Homotrimer.

The enzyme catalyses a UDP-3-O-[(3R)-3-hydroxyacyl]-alpha-D-glucosamine + a (3R)-hydroxyacyl-[ACP] = a UDP-2-N,3-O-bis[(3R)-3-hydroxyacyl]-alpha-D-glucosamine + holo-[ACP] + H(+). Its pathway is bacterial outer membrane biogenesis; LPS lipid A biosynthesis. In terms of biological role, catalyzes the N-acylation of UDP-3-O-acylglucosamine using 3-hydroxyacyl-ACP as the acyl donor. Is involved in the biosynthesis of lipid A, a phosphorylated glycolipid that anchors the lipopolysaccharide to the outer membrane of the cell. The sequence is that of UDP-3-O-acylglucosamine N-acyltransferase 3 from Gloeobacter violaceus (strain ATCC 29082 / PCC 7421).